Here is a 313-residue protein sequence, read N- to C-terminus: 2-dehydro-3-deoxygluconokinase/2-dehydro-3-deoxygalactonokinase (313 aa).

Substrate contacts are provided by residues 34–38 (GSELN), tyrosine 90, 106–108 (YYR), and arginine 166. ATP contacts are provided by residues 164–166 (NIR), 226–231 (KLGSKG), and 255–258 (GAGD). Substrate is bound by residues aspartate 258 and aspartate 294. Residue aspartate 258 is the Proton acceptor of the active site.

In terms of assembly, homohexamer; trimer of dimers.

It carries out the reaction 2-dehydro-3-deoxy-D-gluconate + ATP = 2-dehydro-3-deoxy-6-phospho-D-gluconate + ADP + H(+). The catalysed reaction is 2-dehydro-3-deoxy-D-galactonate + ATP = 2-dehydro-3-deoxy-6-phospho-D-galactonate + ADP + H(+). It functions in the pathway carbohydrate acid metabolism; 2-dehydro-3-deoxy-D-gluconate degradation; D-glyceraldehyde 3-phosphate and pyruvate from 2-dehydro-3-deoxy-D-gluconate: step 1/2. Functionally, involved in the degradation of glucose and galactose via the semi-phosphorylative Entner-Doudoroff pathway. Catalyzes the phosphorylation of 2-keto-3-deoxygluconate (KDG) and 2-keto-3-deoxygalactonate (KDGal) to produce 2-keto-3-deoxy-6-phosphogluconate (KDPG) and 2-keto-3-deoxy-6-phosphogalactonate (KDPGal), respectively. This chain is 2-dehydro-3-deoxygluconokinase/2-dehydro-3-deoxygalactonokinase (kdgK), found in Saccharolobus solfataricus (strain ATCC 35092 / DSM 1617 / JCM 11322 / P2) (Sulfolobus solfataricus).